Here is a 229-residue protein sequence, read N- to C-terminus: Phosphatidylinositol N-acetylglucosaminyltransferase subunit GPI15 (229 aa).

A run of 2 helical transmembrane segments spans residues 59 to 79 (IQYH…VICL) and 101 to 121 (ILII…GPSV).

Belongs to the PIGH family. Component of the phosphatidylinositol N-acetylglucosaminyltransferase (GPI-GlcNAc transferase) complex composed of at least GPI1, GPI2, GPI3, GPI15, GPI19 and ERI1.

It is found in the membrane. The enzyme catalyses a 1,2-diacyl-sn-glycero-3-phospho-(1D-myo-inositol) + UDP-N-acetyl-alpha-D-glucosamine = a 6-(N-acetyl-alpha-D-glucosaminyl)-1-(1,2-diacyl-sn-glycero-3-phospho)-1D-myo-inositol + UDP + H(+). The protein operates within glycolipid biosynthesis; glycosylphosphatidylinositol-anchor biosynthesis. In terms of biological role, part of the complex catalyzing the transfer of N-acetylglucosamine from UDP-N-acetylglucosamine to phosphatidylinositol, the first step of GPI biosynthesis. The chain is Phosphatidylinositol N-acetylglucosaminyltransferase subunit GPI15 (GPI15) from Saccharomyces cerevisiae (strain ATCC 204508 / S288c) (Baker's yeast).